A 964-amino-acid polypeptide reads, in one-letter code: MELISRVFTHGENILLVSSTNKLYIMGNNEYGSCGFKIGTDKTYIESPVYIDIKLDDDDSVKAFYSCNLFTMIHTSKGKIYLSRSFICGGGEIDAYDSESDVGSDAESDAESDAESDSENHTQNNTNTPINNITLINLDSSNNSTQSDNESDNESDNESDNESDQSCSDFDCGPRSDNESDEEVFVDRNDNNSDNIGNSNSIDNESESMTEKAGIILLNEIKTMVDEILSQKNINSVGINDIVIRPSGQYVSNMGYITESGSVSFHTNKNGFLLFKSNVHEILFVEEMFMYSKNNFIYLAIPFKKYQASLRDIAPFHTINKTKNGIKWKYFKIVFPFDTEKIEFCDNFFYTYESNTCYHHVISFYKNVNYYPSWIYFKSEIDINSKNMFFSSDTNSVYVKDNNNVYKYHNFNNSLEKYIDNKLDLDVVIVPDSYRPMEMRLLLKLGITLYSDYNFNGCEDDEEHIFEIMKNQYVPHIIGLNYFESFIVVIVNNPNMLTITTDDGKIFFNIHDITFYKRFYNGIVYLDNGSLFYLTDSEISDQNVWKLTGCQLCELADSTIYSYLFNLPDKIDEIYSSSEFIVLKLIGNKYFYYPVENFDTAQDFKTRCGEISLKNNSVLELVNTSIINRQSKSYHTTVSINIDTDCTTHNSFERLFILTQSLSYSAEYSIRIVDDKNIGFGDGPKIEFCESAIMQFYYKYLIAHNFHTEFNLQEFAKLKPTEIKYLGSMFHMVICQNNSSLPIRLPLAFAVEIYGKEPTIDELEYFACNEDETGFKHIYPAKYNPELVKEFGYESYEHCLKTLCKYNYEDDTDKNILTKKYCEQLAAGFKRYGNIKNIKQMNLPTLDYYISGPYKINRTILINNLVLSGGKDKNNNYLEMFKEFINSLSENELKILLKNWTASTCVRPDNKYRIIIISKSKNAKAGIRFGTCNLEIHIDEKMLDEHNIDTVKEVLITPAQGFKD.

The segment covering 97–117 (DSESDVGSDAESDAESDAESD) has biased composition (acidic residues). Residues 97 to 208 (DSESDVGSDA…SNSIDNESES (112 aa)) form a disordered region. The segment covering 121–148 (HTQNNTNTPINNITLINLDSSNNSTQSD) has biased composition (low complexity). Residues 149–163 (NESDNESDNESDNES) show a composition bias toward acidic residues. Residues 192–203 (NSDNIGNSNSID) are compositionally biased toward low complexity.

This is an uncharacterized protein from Acanthamoeba polyphaga (Amoeba).